We begin with the raw amino-acid sequence, 426 residues long: Glutamyl-tRNA reductase (426 aa).

Substrate contacts are provided by residues 51-54 (TCNR), serine 110, 115-117 (EAQ), and glutamine 121. The active-site Nucleophile is cysteine 52. Residue 190-195 (GAGEMA) coordinates NADP(+).

It belongs to the glutamyl-tRNA reductase family. As to quaternary structure, homodimer.

It catalyses the reaction (S)-4-amino-5-oxopentanoate + tRNA(Glu) + NADP(+) = L-glutamyl-tRNA(Glu) + NADPH + H(+). It participates in porphyrin-containing compound metabolism; protoporphyrin-IX biosynthesis; 5-aminolevulinate from L-glutamyl-tRNA(Glu): step 1/2. Functionally, catalyzes the NADPH-dependent reduction of glutamyl-tRNA(Glu) to glutamate 1-semialdehyde (GSA). This is Glutamyl-tRNA reductase from Desulfotalea psychrophila (strain LSv54 / DSM 12343).